A 445-amino-acid chain; its full sequence is Histidinol dehydrogenase (445 aa).

Positions 138, 199, and 222 each coordinate NAD(+). Substrate is bound by residues Ser245, Gln267, and His270. Zn(2+) contacts are provided by Gln267 and His270. Residues Glu335 and His336 each act as proton acceptor in the active site. Residues His336, Asp369, Glu423, and His428 each contribute to the substrate site. Zn(2+) is bound at residue Asp369. Zn(2+) is bound at residue His428.

This sequence belongs to the histidinol dehydrogenase family. It depends on Zn(2+) as a cofactor.

The catalysed reaction is L-histidinol + 2 NAD(+) + H2O = L-histidine + 2 NADH + 3 H(+). It functions in the pathway amino-acid biosynthesis; L-histidine biosynthesis; L-histidine from 5-phospho-alpha-D-ribose 1-diphosphate: step 9/9. Functionally, catalyzes the sequential NAD-dependent oxidations of L-histidinol to L-histidinaldehyde and then to L-histidine. The sequence is that of Histidinol dehydrogenase from Burkholderia mallei (strain ATCC 23344).